The sequence spans 265 residues: Deoxycytidine kinase 2 (265 aa).

31–39 (GNIAAGKST) is a binding site for ATP. Substrate is bound by residues E56, Y89, and Q100. The active-site Proton acceptor is the E130. 2 residues coordinate substrate: R131 and D136. 191 to 195 (RLQKR) is a binding site for ATP. E200 serves as a coordination point for substrate. 243 to 245 (EDF) provides a ligand contact to ATP.

It belongs to the DCK/DGK family. In terms of assembly, homodimer. In terms of tissue distribution, expressed at high levels in adult intestine, spleen, thymus and testis with lower levels in skeletal muscle and eye. In the embryo, expressed at higher levels until day 10 with lower levels in later stages.

The protein localises to the nucleus. It carries out the reaction 2'-deoxycytidine + a ribonucleoside 5'-triphosphate = dCMP + a ribonucleoside 5'-diphosphate + H(+). It catalyses the reaction 2'-deoxyguanosine + ATP = dGMP + ADP + H(+). The catalysed reaction is 2'-deoxyadenosine + ATP = dAMP + ADP + H(+). In terms of biological role, phosphorylates the deoxyribonucleosides deoxyadenosine, deoxycytidine and deoxyguanosine. Shows highest activity against deoxyguanosine followed by deoxycytidine and then deoxyadenosine. Shows only very minor activity against deoxyuridine and deoxythymidine. The protein is Deoxycytidine kinase 2 of Gallus gallus (Chicken).